The sequence spans 860 residues: Glucans biosynthesis glucosyltransferase H (860 aa).

Transmembrane regions (helical) follow at residues 146–166 (ILLI…KGIL), 200–220 (ILLL…TALM), 519–539 (VFLT…FLVL), 576–596 (LFST…ILIW), 610–630 (TVSM…RMLF), and 686–706 (FLWW…VSVI).

Belongs to the glycosyltransferase 2 family. OpgH subfamily.

It localises to the cell inner membrane. Its pathway is glycan metabolism; osmoregulated periplasmic glucan (OPG) biosynthesis. Its function is as follows. Involved in the biosynthesis of osmoregulated periplasmic glucans (OPGs). This is Glucans biosynthesis glucosyltransferase H from Pseudomonas syringae pv. syringae (strain B728a).